A 339-amino-acid polypeptide reads, in one-letter code: Retroviral-like aspartic protease 1 (339 aa).

The propeptide occupies 1-188; it reads MRNPGGPGWA…SEPEEILFAN (188 aa). Residues 34 to 53 form a disordered region; the sequence is VPAPFNSSRQGKNTAQPTEP. A compositionally biased stretch (polar residues) spans 38–53; the sequence is FNSSRQGKNTAQPTEP. N-linked (GlcNAc...) asparagine glycosylation is present at Asn39. The helical transmembrane segment at 55-75 threads the bilayer; sequence LSSVIAPTLFCAFLYLACVTA. The region spanning 205 to 286 is the Peptidase A2 domain; that stretch reads VRFLVDSGAQ…AEEAIIGTDV (82 aa). Asp210 is an active-site residue. Asn274 is a glycosylation site (N-linked (GlcNAc...) asparagine). The propeptide occupies 325–339; sequence LIEEEEGSSAPEGSH.

In terms of assembly, homodimer. In terms of processing, undergoes autocleavage which is necessary for activation of the protein. In terms of tissue distribution, highly expressed in stratified epithelia in skin, tongue, esophagus, forestomach and vagina. Also expressed in trachea, urinary bladder and thymus. Undetectable in simple epithelia. Within the epidermis, expressed exclusively in the granular layer (at protein level). Levels are elevated in benign skin tumors but are down-regulated in squamous cell carcinomas.

The protein localises to the membrane. Protease responsible for filaggrin processing, essential for the maintenance of a proper epidermis organization. The polypeptide is Retroviral-like aspartic protease 1 (Mus musculus (Mouse)).